A 316-amino-acid polypeptide reads, in one-letter code: Biotin synthase (316 aa).

The region spanning tyrosine 38–arginine 266 is the Radical SAM core domain. Cysteine 56, cysteine 60, and cysteine 63 together coordinate [4Fe-4S] cluster. Positions 100, 131, 191, and 261 each coordinate [2Fe-2S] cluster.

This sequence belongs to the radical SAM superfamily. Biotin synthase family. In terms of assembly, homodimer. Requires [4Fe-4S] cluster as cofactor. It depends on [2Fe-2S] cluster as a cofactor.

It catalyses the reaction (4R,5S)-dethiobiotin + (sulfur carrier)-SH + 2 reduced [2Fe-2S]-[ferredoxin] + 2 S-adenosyl-L-methionine = (sulfur carrier)-H + biotin + 2 5'-deoxyadenosine + 2 L-methionine + 2 oxidized [2Fe-2S]-[ferredoxin]. It functions in the pathway cofactor biosynthesis; biotin biosynthesis; biotin from 7,8-diaminononanoate: step 2/2. Its function is as follows. Catalyzes the conversion of dethiobiotin (DTB) to biotin by the insertion of a sulfur atom into dethiobiotin via a radical-based mechanism. In Thermodesulfovibrio yellowstonii (strain ATCC 51303 / DSM 11347 / YP87), this protein is Biotin synthase.